The sequence spans 467 residues: Dimethylamine methyltransferase MtbB1 (467 aa).

A non-standard amino acid (pyrrolysine) is located at residue Pyl356.

Belongs to the dimethylamine methyltransferase family.

It carries out the reaction Co(I)-[dimethylamine-specific corrinoid protein] + dimethylamine + H(+) = methyl-Co(III)-[dimethylamine-specific corrinoid protein] + methylamine. Its pathway is one-carbon metabolism; methanogenesis from dimethylamine. Functionally, catalyzes the transfer of a methyl group from dimethylamine to the corrinoid cofactor of MtbC. In Methanosarcina barkeri (strain Fusaro / DSM 804), this protein is Dimethylamine methyltransferase MtbB1 (mtbB1).